The chain runs to 161 residues: uncharacterized protein (161 aa).

The helical transmembrane segment at 30-50 (GVILFRLLGVILFRLLGVILF) threads the bilayer.

The protein localises to the membrane. This is an uncharacterized protein from Homo sapiens (Human).